We begin with the raw amino-acid sequence, 1382 residues long: Ninein-like protein (1382 aa).

2 EF-hand domains span residues His-7 to Glu-42 and Leu-41 to Ser-76. The disordered stretch occupies residues Ala-144–Ala-164. Phosphoserine is present on Ser-148. Over residues Glu-150–Ala-164 the composition is skewed to basic and acidic residues. 2 EF-hand domains span residues Thr-196–Gln-231 and Leu-233–Ala-268. Ca(2+)-binding residues include Asp-246, Asp-248, Asp-250, Lys-252, and Glu-257. Coiled-coil stretches lie at residues Gln-384 to Cys-424, Ala-484 to Leu-579, and Ile-616 to Asp-699. Positions Lys-495–Asn-497 match the KEN box motif. Residues Arg-633–Asn-641 carry the D-box motif. Disordered stretches follow at residues Pro-857–Arg-969 and Arg-982–Glu-1006. The segment covering Gln-991–Ala-1004 has biased composition (low complexity). A coiled-coil region spans residues Glu-1046–Ile-1375.

Interacts with gamma-tubulin and TUBGCP4. Interacts with anaphase promoting complex/cyclosome (APC/C). Interacts with CDC20 and FZR1. Isoform 2 interacts with LCA5 and USH2A. Isoform 2 interacts with DZANK1. Phosphorylated by PLK1 which disrupts its centrosome association and interaction with gamma-tubulin. In terms of processing, ubiquitinated by the APC/C complex leading to its degradation. Expressed in KYSE-150 esophageal carcinoma, HeLa cervical carcinoma and U2OS osteosarcoma cells. Expression is regulated in a cell cycle-dependent manner and peaks during G2/M phase (at protein level). Expressed in fetal heart, skeletal muscle, liver, lung and cochlea, and in adult brain, testis, kidney and retina.

It localises to the cytoplasm. It is found in the cytoskeleton. Its subcellular location is the microtubule organizing center. The protein resides in the centrosome. Its function is as follows. Involved in the microtubule organization in interphase cells. Overexpression induces the fragmentation of the Golgi, and causes lysosomes to disperse toward the cell periphery; it also interferes with mitotic spindle assembly. Involved in vesicle transport in photoreceptor cells. May play a role in ovarian carcinogenesis. The protein is Ninein-like protein (NINL) of Homo sapiens (Human).